A 202-amino-acid polypeptide reads, in one-letter code: Nucleoside triphosphate pyrophosphatase (202 aa).

The active-site Proton acceptor is Asp-77.

This sequence belongs to the Maf family. Requires a divalent metal cation as cofactor.

The protein resides in the cytoplasm. The catalysed reaction is a ribonucleoside 5'-triphosphate + H2O = a ribonucleoside 5'-phosphate + diphosphate + H(+). It carries out the reaction a 2'-deoxyribonucleoside 5'-triphosphate + H2O = a 2'-deoxyribonucleoside 5'-phosphate + diphosphate + H(+). In terms of biological role, nucleoside triphosphate pyrophosphatase. May have a dual role in cell division arrest and in preventing the incorporation of modified nucleotides into cellular nucleic acids. The polypeptide is Nucleoside triphosphate pyrophosphatase (Rickettsia canadensis (strain McKiel)).